Consider the following 118-residue polypeptide: UPF0102 protein Cphy_2398 (118 aa).

This sequence belongs to the UPF0102 family.

In Lachnoclostridium phytofermentans (strain ATCC 700394 / DSM 18823 / ISDg) (Clostridium phytofermentans), this protein is UPF0102 protein Cphy_2398.